The sequence spans 379 residues: Anhydro-N-acetylmuramic acid kinase (379 aa).

An ATP-binding site is contributed by 9-16; it reads GTSADGVD.

It belongs to the anhydro-N-acetylmuramic acid kinase family.

The catalysed reaction is 1,6-anhydro-N-acetyl-beta-muramate + ATP + H2O = N-acetyl-D-muramate 6-phosphate + ADP + H(+). It functions in the pathway amino-sugar metabolism; 1,6-anhydro-N-acetylmuramate degradation. The protein operates within cell wall biogenesis; peptidoglycan recycling. Its function is as follows. Catalyzes the specific phosphorylation of 1,6-anhydro-N-acetylmuramic acid (anhMurNAc) with the simultaneous cleavage of the 1,6-anhydro ring, generating MurNAc-6-P. Is required for the utilization of anhMurNAc either imported from the medium or derived from its own cell wall murein, and thus plays a role in cell wall recycling. The chain is Anhydro-N-acetylmuramic acid kinase from Synechococcus sp. (strain CC9605).